The sequence spans 49 residues: U-theraphotoxin-Lk2a (49 aa).

4 cysteine pairs are disulfide-bonded: cysteine 4/cysteine 17, cysteine 8/cysteine 41, cysteine 22/cysteine 24, and cysteine 35/cysteine 46.

This sequence belongs to the neurotoxin 12 (Hwtx-2) family. 04 (lasiotoxin) subfamily. Expressed by the venom gland.

The protein localises to the secreted. Its function is as follows. Toxin that causes irreversible contractile paralysis into adult Aedes aegypti resulting in 100% mortality after 24 hours. This Lasiodora klugi (Bahia scarlet tarantula) protein is U-theraphotoxin-Lk2a.